A 668-amino-acid chain; its full sequence is Macrolide export ATP-binding/permease protein MacB 1/2 (668 aa).

In terms of domain architecture, ABC transporter spans 9-247; sequence IRLRGVGREY…PGPGPAQAPQ (239 aa). An ATP-binding site is contributed by 45–52; sequence GASGSGKS. A disordered region spans residues 230-257; that stretch reads RTGAPAADPGPGPAQAPQPAPQPAPVQA. Pro residues predominate over residues 237 to 255; sequence DPGPGPAQAPQPAPQPAPV. Transmembrane regions (helical) follow at residues 294–314, 541–561, 598–618, and 634–654; these read FLTM…VALG, LALL…IGVM, LVCV…GLAF, and MLAA…LPAV.

This sequence belongs to the ABC transporter superfamily. Macrolide exporter (TC 3.A.1.122) family. Homodimer.

It is found in the cell inner membrane. In terms of biological role, non-canonical ABC transporter that contains transmembrane domains (TMD), which form a pore in the inner membrane, and an ATP-binding domain (NBD), which is responsible for energy generation. Confers resistance against macrolides. This is Macrolide export ATP-binding/permease protein MacB 1/2 from Paracoccus denitrificans (strain Pd 1222).